Consider the following 339-residue polypeptide: Phosphoribosylformylglycinamidine cyclo-ligase (339 aa).

It belongs to the AIR synthase family.

Its subcellular location is the cytoplasm. It carries out the reaction 2-formamido-N(1)-(5-O-phospho-beta-D-ribosyl)acetamidine + ATP = 5-amino-1-(5-phospho-beta-D-ribosyl)imidazole + ADP + phosphate + H(+). It participates in purine metabolism; IMP biosynthesis via de novo pathway; 5-amino-1-(5-phospho-D-ribosyl)imidazole from N(2)-formyl-N(1)-(5-phospho-D-ribosyl)glycinamide: step 2/2. This chain is Phosphoribosylformylglycinamidine cyclo-ligase, found in Fusobacterium nucleatum subsp. nucleatum (strain ATCC 25586 / DSM 15643 / BCRC 10681 / CIP 101130 / JCM 8532 / KCTC 2640 / LMG 13131 / VPI 4355).